The sequence spans 439 residues: Tol-Pal system protein TolB (439 aa).

The N-terminal stretch at 1 to 22 is a signal peptide; that stretch reads MTKFPRWLAILVGLLFPLSALT.

This sequence belongs to the TolB family. In terms of assembly, the Tol-Pal system is composed of five core proteins: the inner membrane proteins TolA, TolQ and TolR, the periplasmic protein TolB and the outer membrane protein Pal. They form a network linking the inner and outer membranes and the peptidoglycan layer.

It is found in the periplasm. In terms of biological role, part of the Tol-Pal system, which plays a role in outer membrane invagination during cell division and is important for maintaining outer membrane integrity. This Xylella fastidiosa (strain M12) protein is Tol-Pal system protein TolB.